A 143-amino-acid polypeptide reads, in one-letter code: Myocilin opposite strand protein (143 aa).

Residues 65-111 (MATRDETITKKSGEGEEMLPSMGMDHESPSKAHLMVPPAPPPSPADA) are disordered. The segment covering 66–78 (ATRDETITKKSGE) has biased composition (basic and acidic residues).

The polypeptide is Myocilin opposite strand protein (Mus musculus (Mouse)).